The primary structure comprises 393 residues: Protein TsgA (393 aa).

At 1–10 (MTNSNRIKLT) the chain is on the cytoplasmic side. Residues 11-31 (WISFLSYALTGALVIVTGMVM) traverse the membrane as a helical segment. Residues 32–50 (GNIADYFHLPVSSMSNTFT) lie on the Periplasmic side of the membrane. Residues 51–71 (FLNAGILISIFLNAWLMEIIP) form a helical membrane-spanning segment. Residues 72–77 (LKTQLR) lie on the Cytoplasmic side of the membrane. Residues 78 to 98 (FGFILMVLAVAGLMFGHSLAL) form a helical membrane-spanning segment. The Periplasmic segment spans residues 99–100 (FS). Residues 101–121 (AAMFVLGLVSGITMSIGTFLI) traverse the membrane as a helical segment. The Cytoplasmic portion of the chain corresponds to 122–133 (TQLYEGRQRGSR). The helical transmembrane segment at 134–154 (LLFTDSFFSMAGMIFPMVAAF) threads the bilayer. Residues 155-161 (LLARSIE) lie on the Periplasmic side of the membrane. Residues 162 to 182 (WYWVYACIGLVYLAIFILTFG) traverse the membrane as a helical segment. The Cytoplasmic segment spans residues 183-205 (CEFPALGKHAQHSQAPVVKEKWG). The chain crosses the membrane as a helical span at residues 206-226 (IGVLFLAVAALCYILGQLGFI). Over 227 to 244 (SWVPEYAKGLGMSLNDAG) the chain is Periplasmic. The chain crosses the membrane as a helical span at residues 245–265 (ALVSDFWMSYMFGMWAFSFIL). Residues 266 to 272 (RFFDLQR) lie on the Cytoplasmic side of the membrane. Residues 273–293 (ILTVLAGMAAVLMYLFITGTQ) form a helical membrane-spanning segment. The Periplasmic segment spans residues 294 to 297 (AHMP). A helical membrane pass occupies residues 298 to 318 (WFILTLGFFSSAIYTSIITLG). Residues 319–331 (SQQTKVASPKLVN) lie on the Cytoplasmic side of the membrane. The helical transmembrane segment at 332 to 352 (FILTCGTIGTMLTFVVTGPIV) threads the bilayer. Residues 353-360 (AHSGPQAA) lie on the Periplasmic side of the membrane. The chain crosses the membrane as a helical span at residues 361-381 (LLTANGLYAVVFVMCFALGFV). Topologically, residues 382–393 (SRHRQHSAPATH) are cytoplasmic.

This sequence belongs to the major facilitator superfamily. TsgA family.

It is found in the cell inner membrane. The polypeptide is Protein TsgA (Salmonella choleraesuis (strain SC-B67)).